The chain runs to 615 residues: Aspartokinase (615 aa).

Disordered regions lie at residues 84–105 (ALQP…GTAT) and 127–171 (SSVS…SISQ). Low complexity-rich tracts occupy residues 90–102 (SSSG…SMSG) and 127–164 (SSVS…ATPS). The ACT domain maps to 467 to 537 (IHSNRKTLSH…EVTVSKDMAI (71 aa)).

The protein belongs to the aspartokinase family.

It catalyses the reaction L-aspartate + ATP = 4-phospho-L-aspartate + ADP. It functions in the pathway amino-acid biosynthesis; L-methionine biosynthesis via de novo pathway; L-homoserine from L-aspartate: step 1/3. It participates in amino-acid biosynthesis; L-threonine biosynthesis; L-threonine from L-aspartate: step 1/5. In terms of biological role, phosphorylates aspartate, the first step in the biosynthesis of amino acids that derive from aspartate (the aspartate family of amino acids), including methioinine and threonine, the latter of which is a precursor to isoleucine. This Cryptococcus neoformans var. grubii serotype A (strain H99 / ATCC 208821 / CBS 10515 / FGSC 9487) (Filobasidiella neoformans var. grubii) protein is Aspartokinase.